Consider the following 384-residue polypeptide: Dual-specificity RNA methyltransferase RlmN (384 aa).

E105 serves as the catalytic Proton acceptor. Residues 111 to 350 (EDDRATLCVS…TIVRKTRGDD (240 aa)) enclose the Radical SAM core domain. A disulfide bridge connects residues C118 and C355. The [4Fe-4S] cluster site is built by C125, C129, and C132. S-adenosyl-L-methionine contacts are provided by residues 179 to 180 (GE), S211, 233 to 235 (SLH), and N312. C355 (S-methylcysteine intermediate) is an active-site residue.

The protein belongs to the radical SAM superfamily. RlmN family. It depends on [4Fe-4S] cluster as a cofactor.

Its subcellular location is the cytoplasm. The enzyme catalyses adenosine(2503) in 23S rRNA + 2 reduced [2Fe-2S]-[ferredoxin] + 2 S-adenosyl-L-methionine = 2-methyladenosine(2503) in 23S rRNA + 5'-deoxyadenosine + L-methionine + 2 oxidized [2Fe-2S]-[ferredoxin] + S-adenosyl-L-homocysteine. It carries out the reaction adenosine(37) in tRNA + 2 reduced [2Fe-2S]-[ferredoxin] + 2 S-adenosyl-L-methionine = 2-methyladenosine(37) in tRNA + 5'-deoxyadenosine + L-methionine + 2 oxidized [2Fe-2S]-[ferredoxin] + S-adenosyl-L-homocysteine. In terms of biological role, specifically methylates position 2 of adenine 2503 in 23S rRNA and position 2 of adenine 37 in tRNAs. m2A2503 modification seems to play a crucial role in the proofreading step occurring at the peptidyl transferase center and thus would serve to optimize ribosomal fidelity. The polypeptide is Dual-specificity RNA methyltransferase RlmN (Escherichia fergusonii (strain ATCC 35469 / DSM 13698 / CCUG 18766 / IAM 14443 / JCM 21226 / LMG 7866 / NBRC 102419 / NCTC 12128 / CDC 0568-73)).